A 120-amino-acid polypeptide reads, in one-letter code: Large ribosomal subunit protein uL18 (120 aa).

This sequence belongs to the universal ribosomal protein uL18 family. Part of the 50S ribosomal subunit; part of the 5S rRNA/L5/L18/L25 subcomplex. Contacts the 5S and 23S rRNAs.

In terms of biological role, this is one of the proteins that bind and probably mediate the attachment of the 5S RNA into the large ribosomal subunit, where it forms part of the central protuberance. This chain is Large ribosomal subunit protein uL18, found in Gluconacetobacter diazotrophicus (strain ATCC 49037 / DSM 5601 / CCUG 37298 / CIP 103539 / LMG 7603 / PAl5).